We begin with the raw amino-acid sequence, 545 residues long: MKLAEALLRALKDRGAQAMFGIPGDFALPFFKVAEETQILPLHTLSHEPAVGFAADAAARYSSTLGVAAVTYGAGAFNMVNAVAGAYAEKSPVVVISGAPGTTEGNAGLLLHHQGRTLDTQFQVFKEITVAQARLDDPAKAPAEIARVLGAARALSRPVYLEIPRNMVNAEVEPVGDDPAWPVDRDALAACADEVLAAMRSATSPVLMVCVEVRRYGLEAKVAELAQRLGVPVVTTFMGRGLLADAPTPPLGTYIGVAGDAEITRLVEESDGLFLLGAILSDTNFAVSQRKIDLRKTIHAFDRAVTLGYHTYADIPLAGLVDALLEGLPPSDRTTRGKEPHAYPTGLQADGEPIAPMDIARAVNDRVRAGQEPLLIAADMGDCLFTAMDMIDAGLMAPGYYAGMGFGVPAGIGAQCVSGGKRILTVVGDGAFQMTGWELGNCRRLGIDPIVILFNNASWEMLRTFQPESAFNDLDDWRFADMAAGMGGDGVRVRTRAELKAALDKAFATRGRFQLIEAMIPRGVLSDTLARFVQGQKRLHAAPRE.

E48 is a binding site for thiamine diphosphate. The segment at 382 to 460 (DCLFTAMDMI…VILFNNASWE (79 aa)) is thiamine pyrophosphate binding. Mg(2+)-binding residues include D429 and N456.

The protein belongs to the TPP enzyme family. It depends on a metal cation as a cofactor. Requires thiamine diphosphate as cofactor.

It carries out the reaction indole-3-pyruvate + H(+) = indole-3-acetaldehyde + CO2. The protein operates within plant hormone metabolism; auxin biosynthesis. In Azospirillum brasilense, this protein is Indole-3-pyruvate decarboxylase (ipdC).